Consider the following 166-residue polypeptide: UPF0304 protein VIBHAR_01542 (166 aa).

It belongs to the UPF0304 family.

This chain is UPF0304 protein VIBHAR_01542, found in Vibrio campbellii (strain ATCC BAA-1116).